A 337-amino-acid polypeptide reads, in one-letter code: Casein kinase I isoform alpha (337 aa).

The 269-residue stretch at 20–288 folds into the Protein kinase domain; sequence YRVIRKIGSG…YLRQLFRILF (269 aa). ATP-binding positions include 26–34 and Lys49; that span reads IGSGSFGDI. Residue Asp139 is the Proton acceptor of the active site.

This sequence belongs to the protein kinase superfamily. CK1 Ser/Thr protein kinase family. Casein kinase I subfamily. As to quaternary structure, interacts with cos. Requires Mg(2+) as cofactor. Post-translationally, phosphorylated. The dephosphorylated kinase is active in the cytoplasm while the active kinase in the nucleus is phosphorylated.

The protein localises to the cytoplasm. Its subcellular location is the nucleus. The enzyme catalyses L-seryl-[protein] + ATP = O-phospho-L-seryl-[protein] + ADP + H(+). It catalyses the reaction L-threonyl-[protein] + ATP = O-phospho-L-threonyl-[protein] + ADP + H(+). With respect to regulation, activity increases following DNA damage. Casein kinases are operationally defined by their preferential utilization of acidic proteins such as caseins as substrates. Can phosphorylate a large number of proteins. Negative regulator of wg signaling. Phosphorylates arm directly or indirectly and stimulates its degradation which prevents inappropriate wg signaling. Phosphorylates smo which promotes its accumulation at the cell surface and its signaling activity in response to hh. Together with dco, regulates proteolytic processing of ci by phosphorylating it, which promotes its binding to slmb, the F-box recognition component of the SCF(slmb) E3 ubiquitin-protein ligase required for ci processing. Inhibits condensin II interphase activity by promoting degradation of the Cap-H2 regulatory subunit and limiting the levels of chromatin-bound Cap-H2 which regulates interphase chromosome organization. The polypeptide is Casein kinase I isoform alpha (CkIalpha) (Drosophila melanogaster (Fruit fly)).